We begin with the raw amino-acid sequence, 340 residues long: Glyceraldehyde-3-phosphate dehydrogenase (340 aa).

NAD(+) is bound by residues 11-12 (TI) and Gly109. A D-glyceraldehyde 3-phosphate-binding site is contributed by 138–140 (SCN). Catalysis depends on Cys139, which acts as the Nucleophile. Arg167 serves as a coordination point for NAD(+). 193-194 (HA) contributes to the D-glyceraldehyde 3-phosphate binding site. Residue Gln300 coordinates NAD(+).

The protein belongs to the glyceraldehyde-3-phosphate dehydrogenase family. As to quaternary structure, homotetramer.

Its subcellular location is the cytoplasm. It carries out the reaction D-glyceraldehyde 3-phosphate + phosphate + NADP(+) = (2R)-3-phospho-glyceroyl phosphate + NADPH + H(+). The enzyme catalyses D-glyceraldehyde 3-phosphate + phosphate + NAD(+) = (2R)-3-phospho-glyceroyl phosphate + NADH + H(+). The protein operates within carbohydrate degradation; glycolysis; pyruvate from D-glyceraldehyde 3-phosphate: step 1/5. In Saccharolobus islandicus (strain Y.N.15.51 / Yellowstone #2) (Sulfolobus islandicus), this protein is Glyceraldehyde-3-phosphate dehydrogenase.